We begin with the raw amino-acid sequence, 241 residues long: Proteasome subunit beta type-1 (241 aa).

N-acetylmethionine is present on methionine 1. Positions 1 to 28 are excised as a propeptide; it reads MLSSTAMYSAPGRDLGMEPHRAAGPLQL. A glycan (O-linked (GlcNAc) serine) is linked at serine 58. Residues serine 62 and serine 68 each carry the phosphoserine modification. Tyrosine 150 is modified (phosphotyrosine). Serine 162 bears the Phosphoserine mark. An N6-acetyllysine modification is found at lysine 204. O-linked (GlcNAc) serine glycosylation occurs at serine 209.

Belongs to the peptidase T1B family. As to quaternary structure, the 26S proteasome consists of a 20S proteasome core and two 19S regulatory subunits. The 20S proteasome core is a barrel-shaped complex made of 28 subunits that are arranged in four stacked rings. The two outer rings are each formed by seven alpha subunits, and the two inner rings are formed by seven beta subunits. The proteolytic activity is exerted by three beta-subunits PSMB5, PSMB6 and PSMB7. Interacts with SERPINB2. Interacts with RFPL4A. In terms of assembly, (Microbial infection) Interacts with HIV-1 protein Tat.

It localises to the cytoplasm. The protein resides in the nucleus. Its function is as follows. Non-catalytic component of the 20S core proteasome complex involved in the proteolytic degradation of most intracellular proteins. This complex plays numerous essential roles within the cell by associating with different regulatory particles. Associated with two 19S regulatory particles, forms the 26S proteasome and thus participates in the ATP-dependent degradation of ubiquitinated proteins. The 26S proteasome plays a key role in the maintenance of protein homeostasis by removing misfolded or damaged proteins that could impair cellular functions, and by removing proteins whose functions are no longer required. Associated with the PA200 or PA28, the 20S proteasome mediates ubiquitin-independent protein degradation. This type of proteolysis is required in several pathways including spermatogenesis (20S-PA200 complex) or generation of a subset of MHC class I-presented antigenic peptides (20S-PA28 complex). This is Proteasome subunit beta type-1 from Homo sapiens (Human).